Consider the following 176-residue polypeptide: ATP synthase subunit d, mitochondrial (176 aa).

F-type ATP synthases have 2 components, the catalytic core F(1) and the membrane-embedded component F(0), linked together by a central stalk and a peripheral stalk. The central stalk, also called rotor shaft, is often seen as part of F(1). The peripheral stalk is seen as part of F(0). F(0) contains the membrane channel next to the rotor. F-type ATP synthases form dimers but each monomer functions independently in ATP generation. The dimer consists of 17 different polypeptides: ATP1 (subunit alpha, 3 molecules per monomer, part of F(1)), ATP2 (subunit beta, 3 copies per monomer, part of F(1)), ATP3 (subunit gamma, part of the central stalk), ATP4 (subunit b, part of the peripheral stalk), ATP5/OSCP (subunit 5/OSCP, part of the peripheral stalk), ATP6 (subunit a, part of the peripheral stalk), ATP7 (subunit d, part of the peripheral stalk), ATP8 (subunit 8, part of the peripheral stalk), OLI1 (subunit c, part of the rotor, 10 molecules per monomer), ATP14 (subunit h, part of the peripheral stalk), ATP15 (subunit epsilon, part of the central stalk), ATP16 (subunit delta, part of the central stalk), ATP17 (subunit f, part of the peripheral stalk), ATP18 (subunit i/j, part of the peripheral stalk), ATP19 (subunit k, dimer-specific, at interface between monomers), ATP20 (subunit g, at interface between monomers), TIM11 (subunit e, at interface between monomers).

The protein localises to the mitochondrion inner membrane. Its function is as follows. Mitochondrial membrane ATP synthase (F(1)F(0) ATP synthase or Complex V) produces ATP from ADP in the presence of a proton gradient across the membrane which is generated by electron transport complexes of the respiratory chain. F-type ATP synthases consist of two structural domains, F(1) - containing the extramembraneous catalytic core, and F(0) - containing the membrane proton channel, linked together by a central stalk and a peripheral stalk. During catalysis, ATP synthesis in the catalytic domain of F(1) is coupled via a rotary mechanism of the central stalk subunits to proton translocation. Part of the complex F(0) domain and the peripheral stalk, which acts as a stator to hold the catalytic alpha/ATP1(3)beta/ATP2(3) subcomplex and subunit a/ATP6 static relative to the rotary elements. The sequence is that of ATP synthase subunit d, mitochondrial from Yarrowia lipolytica (strain CLIB 122 / E 150) (Yeast).